Reading from the N-terminus, the 210-residue chain is Uracil phosphoribosyltransferase (210 aa).

Residues R80, R105, and D132–S140 each bind 5-phospho-alpha-D-ribose 1-diphosphate. Uracil is bound by residues I195 and G200–A202. 5-phospho-alpha-D-ribose 1-diphosphate is bound at residue D201.

The protein belongs to the UPRTase family. It depends on Mg(2+) as a cofactor.

It carries out the reaction UMP + diphosphate = 5-phospho-alpha-D-ribose 1-diphosphate + uracil. The protein operates within pyrimidine metabolism; UMP biosynthesis via salvage pathway; UMP from uracil: step 1/1. With respect to regulation, allosterically activated by GTP. Catalyzes the conversion of uracil and 5-phospho-alpha-D-ribose 1-diphosphate (PRPP) to UMP and diphosphate. The sequence is that of Uracil phosphoribosyltransferase from Thermoanaerobacter pseudethanolicus (strain ATCC 33223 / 39E) (Clostridium thermohydrosulfuricum).